The following is a 347-amino-acid chain: Iron-sulfur cluster assembly protein SufC (347 aa).

The ABC transporter domain maps to 100–346 (LEIKDLHAIE…ENKGYSQFLK (247 aa)). Residue 134–141 (GRNGSGKS) coordinates ATP.

It belongs to the ABC transporter superfamily. Ycf16 family. As to quaternary structure, component of a complex composed of SufB, SufC and SufD in a stoichiometric ratio of 1:2:1. Interacts with SufB. Interacts with SufD; the interaction enhances the ATPase activity of SufC. Proteolytically cleaved.

The protein resides in the plastid. Its subcellular location is the apicoplast. The catalysed reaction is ATP + H2O = ADP + phosphate + H(+). Its pathway is cofactor biosynthesis; iron-sulfur cluster biosynthesis. Its function is as follows. Participates in the sulfur mobilization (SUF) pathway for iron-sulfur (Fe-S) cluster biogenesis. As part of a complex consisting of SufB-SufC(2)-SufD, involved in assembly of [4Fe-4S] clusters. Exhibits ATPase activity. The sequence is that of Iron-sulfur cluster assembly protein SufC from Plasmodium falciparum (isolate 3D7).